Reading from the N-terminus, the 417-residue chain is Serine hydroxymethyltransferase (417 aa).

Residues Leu-120 and 124 to 126 (GHL) each bind (6S)-5,6,7,8-tetrahydrofolate. Lys-229 bears the N6-(pyridoxal phosphate)lysine mark.

Belongs to the SHMT family. As to quaternary structure, homodimer. Pyridoxal 5'-phosphate is required as a cofactor.

Its subcellular location is the cytoplasm. The enzyme catalyses (6R)-5,10-methylene-5,6,7,8-tetrahydrofolate + glycine + H2O = (6S)-5,6,7,8-tetrahydrofolate + L-serine. It functions in the pathway one-carbon metabolism; tetrahydrofolate interconversion. Its pathway is amino-acid biosynthesis; glycine biosynthesis; glycine from L-serine: step 1/1. In terms of biological role, catalyzes the reversible interconversion of serine and glycine with tetrahydrofolate (THF) serving as the one-carbon carrier. This reaction serves as the major source of one-carbon groups required for the biosynthesis of purines, thymidylate, methionine, and other important biomolecules. Also exhibits THF-independent aldolase activity toward beta-hydroxyamino acids, producing glycine and aldehydes, via a retro-aldol mechanism. The chain is Serine hydroxymethyltransferase from Anaeromyxobacter dehalogenans (strain 2CP-C).